A 37-amino-acid chain; its full sequence is Large ribosomal subunit protein bL36A (37 aa).

It belongs to the bacterial ribosomal protein bL36 family.

This chain is Large ribosomal subunit protein bL36A, found in Neisseria meningitidis serogroup C (strain 053442).